The sequence spans 1131 residues: Phytochrome a (1131 aa).

The span at 1 to 23 (MSSSRPAHSSSSSSRTRQSSQAR) shows a compositional bias: low complexity. The disordered stretch occupies residues 1-26 (MSSSRPAHSSSSSSRTRQSSQARILA). The 186-residue stretch at 219–404 (SMEALCNTVV…VFAVHVNKEF (186 aa)) folds into the GAF domain. Cysteine 324 contributes to the phytochromobilin binding site. PAS domains are found at residues 620-690 (VTSE…LQGK) and 750-834 (VEGD…LAGE). Residues 904-1124 (YMRHAINKPL…TFILTAELAA (221 aa)) form the Histidine kinase domain.

This sequence belongs to the phytochrome family. As to quaternary structure, homodimer. Post-translationally, contains one covalently linked phytochromobilin chromophore.

Functionally, regulatory photoreceptor which exists in two forms that are reversibly interconvertible by light: the Pr form that absorbs maximally in the red region of the spectrum and the Pfr form that absorbs maximally in the far-red region. Photoconversion of Pr to Pfr induces an array of morphogenic responses, whereas reconversion of Pfr to Pr cancels the induction of those responses. Pfr controls the expression of a number of nuclear genes including those encoding the small subunit of ribulose-bisphosphate carboxylase, chlorophyll A/B binding protein, protochlorophyllide reductase, rRNA, etc. It also controls the expression of its own gene(s) in a negative feedback fashion. The polypeptide is Phytochrome a (PHYA) (Sorghum bicolor (Sorghum)).